The following is a 146-amino-acid chain: Hemoglobin subunit beta (146 aa).

The residue at position 1 (valine 1) is an N-acetylvaline. In terms of domain architecture, Globin spans 2 to 146 (HLTPEEKNAV…VANALAHKYH (145 aa)). Threonine 12 bears the Phosphothreonine mark. The residue at position 44 (serine 44) is a Phosphoserine. N6-acetyllysine is present on lysine 59. Histidine 63 is a heme b binding site. The residue at position 82 (lysine 82) is an N6-acetyllysine. Histidine 92 lines the heme b pocket. Cysteine 93 carries the post-translational modification S-nitrosocysteine. Lysine 144 carries the post-translational modification N6-acetyllysine.

It belongs to the globin family. As to quaternary structure, heterotetramer of two alpha chains and two beta chains. In terms of tissue distribution, red blood cells.

In terms of biological role, involved in oxygen transport from the lung to the various peripheral tissues. The chain is Hemoglobin subunit beta (HBB) from Theropithecus gelada (Gelada baboon).